A 382-amino-acid chain; its full sequence is Bifunctional enzyme IspD/IspF (382 aa).

Residues 1 to 226 form a 2-C-methyl-D-erythritol 4-phosphate cytidylyltransferase region; sequence MTLAVLIVAA…RSTMDNIPDI (226 aa). Residues 227 to 382 form a 2-C-methyl-D-erythritol 2,4-cyclodiphosphate synthase region; sequence RLGNGYDVHR…ALATATLVRA (156 aa). Residues Asp233 and His235 each coordinate a divalent metal cation. Residues 233–235 and 259–260 contribute to the 4-CDP-2-C-methyl-D-erythritol 2-phosphate site; these read DVH and HS. His267 is an a divalent metal cation binding site. 4-CDP-2-C-methyl-D-erythritol 2-phosphate is bound by residues 281–283, 357–360, Phe364, and Arg367; these read DIG and TTSE.

In the N-terminal section; belongs to the IspD/TarI cytidylyltransferase family. IspD subfamily. The protein in the C-terminal section; belongs to the IspF family. A divalent metal cation serves as cofactor.

The enzyme catalyses 2-C-methyl-D-erythritol 4-phosphate + CTP + H(+) = 4-CDP-2-C-methyl-D-erythritol + diphosphate. The catalysed reaction is 4-CDP-2-C-methyl-D-erythritol 2-phosphate = 2-C-methyl-D-erythritol 2,4-cyclic diphosphate + CMP. Its pathway is isoprenoid biosynthesis; isopentenyl diphosphate biosynthesis via DXP pathway; isopentenyl diphosphate from 1-deoxy-D-xylulose 5-phosphate: step 2/6. The protein operates within isoprenoid biosynthesis; isopentenyl diphosphate biosynthesis via DXP pathway; isopentenyl diphosphate from 1-deoxy-D-xylulose 5-phosphate: step 4/6. Its function is as follows. Bifunctional enzyme that catalyzes the formation of 4-diphosphocytidyl-2-C-methyl-D-erythritol from CTP and 2-C-methyl-D-erythritol 4-phosphate (MEP) (IspD), and catalyzes the conversion of 4-diphosphocytidyl-2-C-methyl-D-erythritol 2-phosphate (CDP-ME2P) to 2-C-methyl-D-erythritol 2,4-cyclodiphosphate (ME-CPP) with a corresponding release of cytidine 5-monophosphate (CMP) (IspF). In Ruegeria sp. (strain TM1040) (Silicibacter sp.), this protein is Bifunctional enzyme IspD/IspF.